We begin with the raw amino-acid sequence, 110 residues long: Insulin-2 (110 aa).

The signal sequence occupies residues 1–24 (MALWIRFLPLLALLILWEPRPAQA). 3 disulfides stabilise this stretch: Cys-31–Cys-96, Cys-43–Cys-109, and Cys-95–Cys-100. A propeptide spans 57–87 (EVEDPQVAQLELGGGPGAGDLQTLALEVARQ) (c peptide).

Belongs to the insulin family. As to quaternary structure, heterodimer of a B chain and an A chain linked by two disulfide bonds.

It localises to the secreted. Insulin decreases blood glucose concentration. It increases cell permeability to monosaccharides, amino acids and fatty acids. It accelerates glycolysis, the pentose phosphate cycle, and glycogen synthesis in liver. The protein is Insulin-2 (Ins2) of Rattus norvegicus (Rat).